The chain runs to 128 residues: Ribosome-binding factor A (128 aa).

This sequence belongs to the RbfA family. In terms of assembly, monomer. Binds 30S ribosomal subunits, but not 50S ribosomal subunits or 70S ribosomes.

The protein resides in the cytoplasm. Its function is as follows. One of several proteins that assist in the late maturation steps of the functional core of the 30S ribosomal subunit. Associates with free 30S ribosomal subunits (but not with 30S subunits that are part of 70S ribosomes or polysomes). Required for efficient processing of 16S rRNA. May interact with the 5'-terminal helix region of 16S rRNA. The polypeptide is Ribosome-binding factor A (Geobacillus thermodenitrificans (strain NG80-2)).